Here is a 129-residue protein sequence, read N- to C-terminus: Ubiquinol-cytochrome-c reductase complex assembly factor 2 (129 aa).

A mitochondrion-targeting transit peptide spans 1 to 13 (MSATRYRRFLKLC).

The protein localises to the mitochondrion matrix. Its subcellular location is the mitochondrion nucleoid. The protein resides in the mitochondrion. Its function is as follows. Required for the assembly of the ubiquinol-cytochrome c reductase complex (mitochondrial respiratory chain complex III or cytochrome b-c1 complex). May play a role in the modulation of respiratory chain activities such as oxygen consumption and ATP production. May be involved in cytochrome b translation and/or stability. The polypeptide is Ubiquinol-cytochrome-c reductase complex assembly factor 2 (uqcc2) (Danio rerio (Zebrafish)).